Reading from the N-terminus, the 144-residue chain is MKNLKSNDVLLHTLTRVVTFIILAFSVYLFFAGHNNPGGGFIGGLMTASALLLMYLGFDMRSIKKAIPFDFTKMIAFGLLIAIFTGFGGLLVGDPYLTQYFEYYQIPILGETELTTALPFDLGIYLVVIGIALTIILTIAEDDM.

The next 4 membrane-spanning stretches (helical) occupy residues 9-31 (VLLH…YLFF), 41-58 (FIGG…YLGF), 75-97 (IAFG…DPYL), and 117-139 (ALPF…ILTI).

Belongs to the CPA3 antiporters (TC 2.A.63) subunit B family. Forms a heterooligomeric complex that consists of seven subunits: MrpA, MrpB, MrpC, MrpD, MrpE, MrpF and MrpG.

The protein resides in the cell membrane. In terms of biological role, mnh complex is a Na(+)Li(+)/H(+) antiporter involved in Na(+) and/or Li(+) excretion and Na(+) resistance. Na(+)/H(+) antiport consumes a transmembrane electrical potential, and is thus inferred to be electrogenic. Does not transport K(+), Ca(2+) or Mg(2+). This chain is Na(+)/H(+) antiporter subunit B (mrpB), found in Alkalihalophilus pseudofirmus (strain ATCC BAA-2126 / JCM 17055 / OF4) (Bacillus pseudofirmus).